The primary structure comprises 60 residues: Small ribosomal subunit protein bS21 (60 aa).

It belongs to the bacterial ribosomal protein bS21 family.

In Mycoplasma pneumoniae (strain ATCC 29342 / M129 / Subtype 1) (Mycoplasmoides pneumoniae), this protein is Small ribosomal subunit protein bS21 (rpsU).